Here is a 564-residue protein sequence, read N- to C-terminus: Urocanate hydratase (564 aa).

Residues 58–59, glutamine 136, 182–184, glutamate 202, arginine 207, 248–249, 269–273, 279–280, and tyrosine 328 each bind NAD(+); these read GG, GMG, NA, QTSAH, and YL. Residue cysteine 416 is part of the active site. Glycine 498 serves as a coordination point for NAD(+).

Belongs to the urocanase family. Requires NAD(+) as cofactor.

Its subcellular location is the cytoplasm. The enzyme catalyses 4-imidazolone-5-propanoate = trans-urocanate + H2O. It participates in amino-acid degradation; L-histidine degradation into L-glutamate; N-formimidoyl-L-glutamate from L-histidine: step 2/3. Catalyzes the conversion of urocanate to 4-imidazolone-5-propionate. The sequence is that of Urocanate hydratase from Aliivibrio salmonicida (strain LFI1238) (Vibrio salmonicida (strain LFI1238)).